Here is a 367-residue protein sequence, read N- to C-terminus: Histidinol-phosphate aminotransferase (367 aa).

Lys-226 is subject to N6-(pyridoxal phosphate)lysine.

The protein belongs to the class-II pyridoxal-phosphate-dependent aminotransferase family. Histidinol-phosphate aminotransferase subfamily. In terms of assembly, homodimer. Pyridoxal 5'-phosphate is required as a cofactor.

The catalysed reaction is L-histidinol phosphate + 2-oxoglutarate = 3-(imidazol-4-yl)-2-oxopropyl phosphate + L-glutamate. The protein operates within amino-acid biosynthesis; L-histidine biosynthesis; L-histidine from 5-phospho-alpha-D-ribose 1-diphosphate: step 7/9. The chain is Histidinol-phosphate aminotransferase from Aliarcobacter butzleri (strain RM4018) (Arcobacter butzleri).